Here is a 327-residue protein sequence, read N- to C-terminus: Cyclic AMP-responsive element-binding protein 1 (327 aa).

Disordered stretches follow at residues Met-1 to Ala-29 and Ser-94 to Ile-113. A KID domain is found at Asp-8–Thr-146. Residues Ala-20–Ala-29 show a composition bias toward polar residues. Ser-119 carries the phosphoserine; by CaMK1, CaMK2, CaMK4, PKB/AKT1 or PKB/AKT2, RPS6KA3, RPS6KA4, RPS6KA5 and SGK1 modification. Lys-122 is covalently cross-linked (Glycyl lysine isopeptide (Lys-Gly) (interchain with G-Cter in SUMO2)). Residues Asp-126–Pro-149 are disordered. A Phosphoserine; by CaMK2 modification is found at Ser-128. The residue at position 257 (Ser-257) is a Phosphoserine; by HIPK2. In terms of domain architecture, bZIP spans Ala-269–Asp-327. The interval Arg-270 to Lys-295 is basic motif. Glycyl lysine isopeptide (Lys-Gly) (interchain with G-Cter in SUMO1) cross-links involve residues Lys-271 and Lys-290. The interval Leu-297–Leu-318 is leucine-zipper.

It belongs to the bZIP family. In terms of assembly, interacts with PPRC1. Binds DNA as a dimer. This dimer is stabilized by magnesium ions. Interacts, through the bZIP domain, with the coactivators CRTC1/TORC1, CRTC2/TORC2 and CRTC3/TORC3. When phosphorylated on Ser-119, binds CREBBP. Interacts with CREBL2; regulates CREB1 phosphorylation, stability and transcriptional activity. Interacts (phosphorylated form) with TOX3. Interacts with ARRB1. Binds to HIPK2. Interacts with SGK1. Interacts with TSSK4; this interaction facilitates phosphorylation on Ser-119. Forms a complex with KMT2A and CREBBP. Interacts with TOX4; CREB1 is required for full induction of TOX4-dependent activity and the interaction is increased by cAMP and inhibited by insulin. In terms of processing, phosphorylation of Ser-119 allows CREBBP binding. Stimulated by phosphorylation. Phosphorylation of both Ser-128 and Ser-119 in the SCN regulates the activity of CREB and participate in circadian rhythm generation. Phosphorylated upon calcium influx by CaMK4 and CaMK2 on Ser-119. CaMK4 is much more potent than CaMK2 in activating CREB. Phosphorylated by CaMK2 on Ser-128. Phosphorylation of Ser-128 blocks CREB-mediated transcription even when Ser-119 is phosphorylated. Phosphorylated by CaMK1. Phosphorylation of Ser-257 by HIPK2 in response to genotoxic stress promotes CREB1 activity, facilitating the recruitment of the coactivator CBP. Phosphorylated at Ser-119 by RPS6KA3, RPS6KA4 and RPS6KA5 in response to mitogenic or stress stimuli. CREBL2 positively regulates phosphorylation at Ser-119 thereby stimulating CREB1 transcriptional activity. In liver, phosphorylation is induced by fasting or glucagon in a circadian fashion. Phosphorylated by TSSK4 on Ser-119. Post-translationally, sumoylated with SUMO1. Sumoylation on Lys-290, but not on Lys-271, is required for nuclear localization of this protein. Sumoylation is enhanced under hypoxia, promoting nuclear localization and stabilization.

It is found in the nucleus. Phosphorylation-dependent transcription factor that stimulates transcription upon binding to the DNA cAMP response element (CRE), a sequence present in many viral and cellular promoters. Transcription activation is enhanced by the TORC coactivators which act independently of Ser-119 phosphorylation. Involved in different cellular processes including the synchronization of circadian rhythmicity and the differentiation of adipose cells. Regulates the expression of apoptotic and inflammatory response factors in cardiomyocytes in response to ERFE-mediated activation of AKT signaling. The sequence is that of Cyclic AMP-responsive element-binding protein 1 (Creb1) from Rattus norvegicus (Rat).